The following is a 383-amino-acid chain: Serine protease 23 (383 aa).

The signal sequence occupies residues 1 to 19 (MAGIPGLLFLLFFLLCAVG). An N-linked (GlcNAc...) asparagine glycan is attached at Asn93. Ser109 is modified (phosphoserine; by FAM20C). A disulfide bond links Cys160 and Cys176. The active-site Charge relay system is His175. Asn207 is a glycosylation site (N-linked (GlcNAc...) asparagine). Active-site charge relay system residues include Asp240 and Ser316.

It belongs to the peptidase S1 family.

The protein localises to the secreted. The polypeptide is Serine protease 23 (PRSS23) (Homo sapiens (Human)).